The primary structure comprises 176 residues: Large ribosomal subunit protein uL10 (176 aa).

This sequence belongs to the universal ribosomal protein uL10 family. Part of the ribosomal stalk of the 50S ribosomal subunit. The N-terminus interacts with L11 and the large rRNA to form the base of the stalk. The C-terminus forms an elongated spine to which L12 dimers bind in a sequential fashion forming a multimeric L10(L12)X complex.

Functionally, forms part of the ribosomal stalk, playing a central role in the interaction of the ribosome with GTP-bound translation factors. The polypeptide is Large ribosomal subunit protein uL10 (Carboxydothermus hydrogenoformans (strain ATCC BAA-161 / DSM 6008 / Z-2901)).